Consider the following 382-residue polypeptide: Flap endonuclease 1-B (382 aa).

The N-domain stretch occupies residues 1–104 (MGIHGLAKLI…GELAKRSERR (104 aa)). D34 is a binding site for Mg(2+). DNA contacts are provided by R47 and R70. Residues D86, E158, E160, D179, and D181 each coordinate Mg(2+). Residues 122–253 (NIEKFNKRLV…KRAIDLIRQH (132 aa)) form an I-domain region. E158 contacts DNA. G231 and D233 together coordinate DNA. D233 lines the Mg(2+) pocket. The tract at residues 336 to 344 (TQGRLDDFF) is interaction with PCNA. The interval 352–382 (STKRKEVESKGSTKKKSKTGGTPAGKFKRGK) is disordered.

This sequence belongs to the XPG/RAD2 endonuclease family. FEN1 subfamily. In terms of assembly, interacts with PCNA. Three molecules of fen1 bind to one PCNA trimer with each molecule binding to one PCNA monomer. PCNA stimulates the nuclease activity without altering cleavage specificity. Mg(2+) is required as a cofactor. Phosphorylated. Phosphorylation upon DNA damage induces relocalization to the nuclear plasma.

The protein localises to the nucleus. It localises to the nucleolus. Its subcellular location is the nucleoplasm. It is found in the mitochondrion. Structure-specific nuclease with 5'-flap endonuclease and 5'-3' exonuclease activities involved in DNA replication and repair. During DNA replication, cleaves the 5'-overhanging flap structure that is generated by displacement synthesis when DNA polymerase encounters the 5'-end of a downstream Okazaki fragment. It enters the flap from the 5'-end and then tracks to cleave the flap base, leaving a nick for ligation. Also involved in the long patch base excision repair (LP-BER) pathway, by cleaving within the apurinic/apyrimidinic (AP) site-terminated flap. Acts as a genome stabilization factor that prevents flaps from equilibrating into structures that lead to duplications and deletions. Also possesses 5'-3' exonuclease activity on nicked or gapped double-stranded DNA, and exhibits RNase H activity. Also involved in replication and repair of rDNA and in repairing mitochondrial DNA. The polypeptide is Flap endonuclease 1-B (fen1-b) (Xenopus laevis (African clawed frog)).